A 156-amino-acid chain; its full sequence is Small ribosomal subunit protein uS7 (156 aa).

Belongs to the universal ribosomal protein uS7 family. As to quaternary structure, part of the 30S ribosomal subunit. Contacts proteins S9 and S11.

In terms of biological role, one of the primary rRNA binding proteins, it binds directly to 16S rRNA where it nucleates assembly of the head domain of the 30S subunit. Is located at the subunit interface close to the decoding center, probably blocks exit of the E-site tRNA. The chain is Small ribosomal subunit protein uS7 from Clostridium botulinum (strain Kyoto / Type A2).